The sequence spans 52 residues: Ornatin-B (52 aa).

The Cell attachment site signature appears at 42 to 44 (RGD).

It belongs to the ornatin family.

It is found in the secreted. Its function is as follows. Potent inhibitor of fibrinogen interaction with platelet receptors expressed on glycoprotein IIb-IIIa complex. May prevent blood from clotting during either feeding and/or storage of ingested blood. The protein is Ornatin-B of Placobdella ornata (Turtle leech).